A 71-amino-acid chain; its full sequence is Paralithocin 2 (71 aa).

The first 23 residues, 1–23 (MGAAKVLLVVLAVMVAVPNLAEG), serve as a signal peptide directing secretion. Cystine bridges form between Cys-29-Cys-58, Cys-34-Cys-54, Cys-39-Cys-52, and Cys-44-Cys-55. Arg-70 is modified (arginine amide; partial).

This sequence belongs to the paralithocin family. The amidated form is probably the active form.

Functionally, has antibacterial activity, mainly against marine Gram-positive bacteria like C.maltaromaticum (MIC=50 uM), C.mobile (MIC=50 uM), C.divergens (MIC=50 uM) and C.funditum (MIC=25 uM) but also against C.glutamicum (MIC=12.5 uM). Has very little or no activity against Gram-negative bacteria. In Paralithodes camtschaticus (Red king crab), this protein is Paralithocin 2.